We begin with the raw amino-acid sequence, 105 residues long: Nitrogenase-stabilizing/protective protein NifW 2 (105 aa).

It belongs to the NifW family.

Functionally, may protect the nitrogenase Fe-Mo protein from oxidative damage. The polypeptide is Nitrogenase-stabilizing/protective protein NifW 2 (nifW2) (Trichormus variabilis (strain ATCC 29413 / PCC 7937) (Anabaena variabilis)).